Consider the following 145-residue polypeptide: D-aminoacyl-tRNA deacylase (145 aa).

The short motif at 137-138 (GP) is the Gly-cisPro motif, important for rejection of L-amino acids element.

It belongs to the DTD family. Homodimer.

It localises to the cytoplasm. The enzyme catalyses glycyl-tRNA(Ala) + H2O = tRNA(Ala) + glycine + H(+). It carries out the reaction a D-aminoacyl-tRNA + H2O = a tRNA + a D-alpha-amino acid + H(+). An aminoacyl-tRNA editing enzyme that deacylates mischarged D-aminoacyl-tRNAs. Also deacylates mischarged glycyl-tRNA(Ala), protecting cells against glycine mischarging by AlaRS. Acts via tRNA-based rather than protein-based catalysis; rejects L-amino acids rather than detecting D-amino acids in the active site. By recycling D-aminoacyl-tRNA to D-amino acids and free tRNA molecules, this enzyme counteracts the toxicity associated with the formation of D-aminoacyl-tRNA entities in vivo and helps enforce protein L-homochirality. This is D-aminoacyl-tRNA deacylase from Methylacidiphilum infernorum (isolate V4) (Methylokorus infernorum (strain V4)).